Here is a 518-residue protein sequence, read N- to C-terminus: 12S seed storage globulin 2 (518 aa).

The first 24 residues, 1 to 24, serve as a signal peptide directing secretion; sequence MATTRFPSLLFYSYIFLLCNGSMA. 2 cysteine pairs are disulfide-bonded: Cys-45–Cys-78 and Cys-121–Cys-324. The Cupin type-1 1 domain occupies 50–240; that stretch reads LQAFEPLRQV…ALGISQQVAQ (191 aa). Residues 280 to 311 form a disordered region; the sequence is IQSQEEQSTQYQVGQSPQYQEGQSTQYQPGQS. The Cupin type-1 2 domain maps to 330-479; sequence QNIENPKRAD…AYRISRQEAQ (150 aa). The segment at 482–518 is disordered; it reads KNNRGEEFDAFTPKFTQTGSQSYQDEGESSSTEKASE. Polar residues predominate over residues 495-518; sequence KFTQTGSQSYQDEGESSSTEKASE.

This sequence belongs to the 11S seed storage protein (globulins) family. As to quaternary structure, hexamer; each subunit is composed of an acidic and a basic chain derived from a single precursor and linked by a disulfide bond.

Its function is as follows. This is a seed storage protein. The protein is 12S seed storage globulin 2 of Avena sativa (Oat).